We begin with the raw amino-acid sequence, 337 residues long: Ycf66-like protein (337 aa).

The segment at 111 to 337 (TEAELDQLEP…GADDQERFDY (227 aa)) is disordered. A compositionally biased stretch (acidic residues) spans 113–123 (AELDQLEPEDE). Basic and acidic residues-rich tracts occupy residues 133–143 (RGYDDDARSGR) and 253–269 (FGDR…RPYE). The span at 304-316 (QSRSGNPRSQRPS) shows a compositional bias: polar residues.

Belongs to the ycf66 family.

This is Ycf66-like protein from Synechocystis sp. (strain ATCC 27184 / PCC 6803 / Kazusa).